Consider the following 319-residue polypeptide: UPF0761 membrane protein PBPRA3489 (319 aa).

Transmembrane regions (helical) follow at residues 50–70 (LVPM…FAGL), 107–127 (VGIG…DHAL), 143–163 (FSIY…SIAV), 188–208 (ALPV…VPNL), 215–235 (ALLG…GFAL), and 249–269 (ALAV…IVLL).

This sequence belongs to the UPF0761 family.

The protein localises to the cell inner membrane. The sequence is that of UPF0761 membrane protein PBPRA3489 from Photobacterium profundum (strain SS9).